The primary structure comprises 328 residues: uncharacterized protein (328 aa).

Belongs to the Gfo/Idh/MocA family.

This is an uncharacterized protein from Escherichia coli (strain K12).